Consider the following 360-residue polypeptide: LETM1 domain-containing protein 1 (360 aa).

Residues 1-110 (MALSRVCWAR…KKARRIKTNM (110 aa)) form a required and sufficient for mitochondrial import region. Topologically, residues 1-137 (MALSRVCWAR…LRQFRQDVTK (137 aa)) are cytoplasmic. The chain crosses the membrane as a helical span at residues 138–158 (CLFLGIISIPPFANYLVFLLM). The Mitochondrial intermembrane segment spans residues 159–360 (YLFPRQLLIR…LSTNYLGTRR (202 aa)). One can recognise a Letm1 RBD domain in the interval 186-360 (FRKQSHPEII…LSTNYLGTRR (175 aa)).

In terms of assembly, interacts with BRI3BP. Interacts (via C-terminal) with SMARCA4; the interaction regulates transcriptional expression of thermogenic genes in brown adipose tissue. Kidney, liver, skeletal muscle, heart and brain. Overexpressed in various tumors including leukemia, lymphoma, and carcinomas of the breast, kidney, ovary, stomach, colon and uterine cervix.

It localises to the mitochondrion outer membrane. It is found in the nucleus. The protein localises to the mitochondrion inner membrane. Its function is as follows. Plays an essential role for mitochondrial structure and function, as well as thermogenesis of brown adipocytes. In brown adipose tissue also localizes in the nucleus where it interacts with the chromatin remodeler SMARCA4 to regulate thermogenic genes expression, such as UCP1. May regulate phagocytosis and inflammatory responses to lipopolysaccharide in macrophages. Involved in tumorigenesis and may function as a negative regulator of the p53/TP53. The protein is LETM1 domain-containing protein 1 of Homo sapiens (Human).